The sequence spans 178 residues: Large ribosomal subunit protein bL17 (178 aa).

The segment covering 126–139 (DRARRVAASKKAEE) has biased composition (basic and acidic residues). The tract at residues 126-178 (DRARRVAASKKAEEQAPAAEAEEQAPAAEAEAPAADAAAEAKADEAAEDKKDA) is disordered. A compositionally biased stretch (low complexity) spans 140–163 (QAPAAEAEEQAPAAEAEAPAADAA). Residues 164–178 (AEAKADEAAEDKKDA) are compositionally biased toward basic and acidic residues.

It belongs to the bacterial ribosomal protein bL17 family. As to quaternary structure, part of the 50S ribosomal subunit. Contacts protein L32.

The sequence is that of Large ribosomal subunit protein bL17 from Nocardia farcinica (strain IFM 10152).